We begin with the raw amino-acid sequence, 156 residues long: WASQVSENRPVCKAIIQGKQFEGLVDTGADVSIIALNQWPKNWPKQKAVIGLVGIGTASEVYQSMEILHCLGPDNQESTVQPMITSIPLNLWGRDLLQQWGAEITMPAPLYSPTSQKIMTKRGYIPGKGLGKNEDGIKIPFEAKINQKREGIGYPF.

Residues 21 to 96 (FEGLVDTGAD…IPLNLWGRDL (76 aa)) form the Peptidase A2 domain. Asp26 is an active-site residue. The G-patch domain maps to 111–156 (YSPTSQKIMTKRGYIPGKGLGKNEDGIKIPFEAKINQKREGIGYPF).

It belongs to the peptidase A2 family. HERV class-II K(HML-2) subfamily. In terms of assembly, active as a homodimer. Post-translationally, autoproteolytically processed at the N-terminus. Expected C-terminal autoprocessing not detected. The sequence shown is that of the processed Pro protein.

It carries out the reaction Processing at the authentic HIV-1 PR recognition site and release of the mature p17 matrix and the p24 capsid protein, as a result of the cleavage of the -SQNY-|-PIVQ- cleavage site.. In terms of biological role, retroviral proteases have roles in the processing of the primary translation products and the maturation of the viral particle. Endogenous Pro proteins may have kept, lost or modified their original function during evolution. The polypeptide is Endogenous retrovirus group K member 8 Pro protein (ERVK-8) (Homo sapiens (Human)).